The chain runs to 187 residues: Adenylate kinase (187 aa).

10–15 serves as a coordination point for ATP; it reads GSGKGT. The NMP stretch occupies residues 30–59; it reads STGDLLRSEVVAGTPLGLQAKQVMAQGDLV. AMP contacts are provided by residues Thr-31, Arg-36, 57 to 59, 85 to 88, and Gln-92; these read DLV and GYPR. The LID stretch occupies residues 126–136; that stretch reads GRAQAEGREDD. Position 127 (Arg-127) interacts with ATP. Positions 133 and 144 each coordinate AMP. Gly-172 serves as a coordination point for ATP.

This sequence belongs to the adenylate kinase family. As to quaternary structure, monomer.

Its subcellular location is the cytoplasm. It carries out the reaction AMP + ATP = 2 ADP. It participates in purine metabolism; AMP biosynthesis via salvage pathway; AMP from ADP: step 1/1. Functionally, catalyzes the reversible transfer of the terminal phosphate group between ATP and AMP. Plays an important role in cellular energy homeostasis and in adenine nucleotide metabolism. In Xylella fastidiosa (strain 9a5c), this protein is Adenylate kinase.